The following is a 95-amino-acid chain: Aspartyl/glutamyl-tRNA(Asn/Gln) amidotransferase subunit C (95 aa).

It belongs to the GatC family. In terms of assembly, heterotrimer of A, B and C subunits.

The catalysed reaction is L-glutamyl-tRNA(Gln) + L-glutamine + ATP + H2O = L-glutaminyl-tRNA(Gln) + L-glutamate + ADP + phosphate + H(+). It carries out the reaction L-aspartyl-tRNA(Asn) + L-glutamine + ATP + H2O = L-asparaginyl-tRNA(Asn) + L-glutamate + ADP + phosphate + 2 H(+). Functionally, allows the formation of correctly charged Asn-tRNA(Asn) or Gln-tRNA(Gln) through the transamidation of misacylated Asp-tRNA(Asn) or Glu-tRNA(Gln) in organisms which lack either or both of asparaginyl-tRNA or glutaminyl-tRNA synthetases. The reaction takes place in the presence of glutamine and ATP through an activated phospho-Asp-tRNA(Asn) or phospho-Glu-tRNA(Gln). This is Aspartyl/glutamyl-tRNA(Asn/Gln) amidotransferase subunit C from Chromohalobacter salexigens (strain ATCC BAA-138 / DSM 3043 / CIP 106854 / NCIMB 13768 / 1H11).